We begin with the raw amino-acid sequence, 220 residues long: Probable nicotinate-nucleotide adenylyltransferase (220 aa).

This sequence belongs to the NadD family.

The enzyme catalyses nicotinate beta-D-ribonucleotide + ATP + H(+) = deamido-NAD(+) + diphosphate. The protein operates within cofactor biosynthesis; NAD(+) biosynthesis; deamido-NAD(+) from nicotinate D-ribonucleotide: step 1/1. Functionally, catalyzes the reversible adenylation of nicotinate mononucleotide (NaMN) to nicotinic acid adenine dinucleotide (NaAD). The sequence is that of Probable nicotinate-nucleotide adenylyltransferase from Serratia proteamaculans (strain 568).